A 432-amino-acid chain; its full sequence is Dihydroorotase (432 aa).

Zn(2+) contacts are provided by His-60 and His-62. Substrate-binding positions include 62–64 and Asn-94; that span reads HLR. The Zn(2+) site is built by Asp-152, His-179, and His-232. Substrate is bound at residue Asn-278. Asp-305 serves as a coordination point for Zn(2+). Residue Asp-305 is part of the active site. Residues His-309 and 323–324 contribute to the substrate site; that span reads FG.

It belongs to the metallo-dependent hydrolases superfamily. DHOase family. Class I DHOase subfamily. Zn(2+) serves as cofactor.

It carries out the reaction (S)-dihydroorotate + H2O = N-carbamoyl-L-aspartate + H(+). It functions in the pathway pyrimidine metabolism; UMP biosynthesis via de novo pathway; (S)-dihydroorotate from bicarbonate: step 3/3. In terms of biological role, catalyzes the reversible cyclization of carbamoyl aspartate to dihydroorotate. The sequence is that of Dihydroorotase from Elusimicrobium minutum (strain Pei191).